We begin with the raw amino-acid sequence, 320 residues long: Cytochrome f (320 aa).

The first 35 residues, M1–A35, serve as a signal peptide directing secretion. Y36, C56, C59, and H60 together coordinate heme. Residues V286–L305 traverse the membrane as a helical segment.

This sequence belongs to the cytochrome f family. As to quaternary structure, the 4 large subunits of the cytochrome b6-f complex are cytochrome b6, subunit IV (17 kDa polypeptide, petD), cytochrome f and the Rieske protein, while the 4 small subunits are PetG, PetL, PetM and PetN. The complex functions as a dimer. The cofactor is heme.

It is found in the plastid. Its subcellular location is the chloroplast thylakoid membrane. In terms of biological role, component of the cytochrome b6-f complex, which mediates electron transfer between photosystem II (PSII) and photosystem I (PSI), cyclic electron flow around PSI, and state transitions. This chain is Cytochrome f (petA), found in Pisum sativum (Garden pea).